The sequence spans 1199 residues: Chromatin structure-remodeling complex subunit snf21 (1199 aa).

The region spanning 256 to 328 (QRSDRERRLK…AKQRLQALKE (73 aa)) is the HSA domain. The 166-residue stretch at 429–594 (ISLYNNHLNG…WALLNFVLPR (166 aa)) folds into the Helicase ATP-binding domain. Residue 442-449 (DEMGLGKT) participates in ATP binding. The DEGH box motif lies at 544-547 (DEGH). One can recognise a Helicase C-terminal domain in the interval 740–903 (LLDRILPKLF…STPEEREAFL (164 aa)). The interval 1017 to 1059 (MESEARPTRGRPKRNIASVDETPALTLNGKPKKKRGPAPDTLT) is disordered. The Bromo domain maps to 1061–1171 (EHRSLLRRVC…TAMETKIEEL (111 aa)).

It belongs to the SNF2/RAD54 helicase family. Component of the RSC complex composed of at least arp9, arp42, rsc1, rsc4, rsc7, rsc9, rsc58, sfh1, snf21, ssr1, ssr2, ssr3 and ssr4. The complex interacts with histone and histone variant components of centromeric chromatin.

It is found in the nucleus. Its function is as follows. Helicase. Component of the chromatin structure remodeling complex (RSC), which is involved in transcription regulation and nucleosome positioning. Controls particularly membrane and organelle development genes. In Schizosaccharomyces pombe (strain 972 / ATCC 24843) (Fission yeast), this protein is Chromatin structure-remodeling complex subunit snf21 (snf21).